A 239-amino-acid chain; its full sequence is MNPELFAETLSKYNFKLSPVQEQQFKTYFKELVRVNEHVNLTRITDEDEVYLKHFYDSVTPLLLWPEVFAEGAKLCDVGAGAGFPSLPIKILRPDLEVTIVDSLGKRLNFLSDLLEKLGIEGVNLVHGRAEDVGQNPDYREKFDLVTARAVARMSVLSEYCLPLAKVGGKFLALKGPRADEELEDAKSALEKLGGEVVFTRVITLPGSTEVRTLVLVDKVEATPGKYPRQAGTPNRKPL.

S-adenosyl-L-methionine contacts are provided by residues glycine 79, phenylalanine 84, 130-131, and arginine 149; that span reads AE.

The protein belongs to the methyltransferase superfamily. RNA methyltransferase RsmG family.

The protein resides in the cytoplasm. Specifically methylates the N7 position of a guanine in 16S rRNA. The polypeptide is Ribosomal RNA small subunit methyltransferase G (Lactobacillus delbrueckii subsp. bulgaricus (strain ATCC 11842 / DSM 20081 / BCRC 10696 / JCM 1002 / NBRC 13953 / NCIMB 11778 / NCTC 12712 / WDCM 00102 / Lb 14)).